The following is a 499-amino-acid chain: MVPVIALVGRPNVGKSTLFNRLTKSRDAIVAEYAGLTRDRQYGEAKWQGRTYIVIDTGGISGDEEGIDAKMAEQSLQAIEEADAVLFMVDSRAGLTAADQMIGEHLRKRNKRCFLVANKVDSVDPDIARAEFSPLGLGDALPIAAAHGRGISHMLEQALGIFPKDNADENAEGEEGGELAEGEEVVAEGQEPKRIPGPSEKEGIKIAIIGRPNVGKSTLVNRMLGEERVIVYDQAGTTRDSIYIPFERDEEKYTLIDTAGVRRRGKIFEAVEKFSVVKTLQAIQDANVVIFVMDAREGVVEHDLNLLGFVLETGRALVIALNKWDGMEQGEKDYVKTELERRLFFVDYADIHFISAKHGTGVGHLYKSVQAAFKSAITRWPTSRLTQILEDAVREHQPPMVNSRRIKLRYAHLGGANPPLIVIHGNQVDAVPKSYTRYLENTYRRVLKLVGTPIRIEYKGGDNPYEGKKNTLTDRQVNKKRRLMSHHKKAEKKRRDKKR.

One can recognise an EngA-type G 1 domain in the interval proline 3–asparagine 166. Residues glycine 9 to serine 16, aspartate 56 to isoleucine 60, and asparagine 118 to aspartate 121 each bind GTP. Positions asparagine 166–serine 199 are disordered. Over residues aspartate 168–valine 186 the composition is skewed to acidic residues. Residues glutamine 190–serine 199 show a composition bias toward basic and acidic residues. The EngA-type G 2 domain occupies isoleucine 204 to isoleucine 377. Residues glycine 210–serine 217, aspartate 257–valine 261, and asparagine 322–aspartate 325 each bind GTP. In terms of domain architecture, KH-like spans threonine 378–aspartate 462. Residues lysine 459–leucine 472 are compositionally biased toward basic and acidic residues. Residues lysine 459 to arginine 499 form a disordered region. The span at asparagine 478–arginine 499 shows a compositional bias: basic residues.

The protein belongs to the TRAFAC class TrmE-Era-EngA-EngB-Septin-like GTPase superfamily. EngA (Der) GTPase family. Associates with the 50S ribosomal subunit.

GTPase that plays an essential role in the late steps of ribosome biogenesis. The sequence is that of GTPase Der from Stutzerimonas stutzeri (strain A1501) (Pseudomonas stutzeri).